Here is a 367-residue protein sequence, read N- to C-terminus: Viral cathepsin (367 aa).

The N-terminal stretch at 1-25 (MRKYHSNIMHKIITFVSLLWTFVVC) is a signal peptide. Residues 26-156 (DEISLHTSSS…IVKGAPDIRL (131 aa)) constitute a propeptide, activation peptide. Asn-103 and Asn-135 each carry an N-linked (GlcNAc...) asparagine; by host glycan. Disulfide bonds link Cys-177–Cys-218, Cys-211–Cys-251, and Cys-306–Cys-354. Cys-180 is a catalytic residue. Residues His-313 and Asn-333 contribute to the active site.

It belongs to the peptidase C1 family. Synthesized as an inactive proenzyme and activated by proteolytic removal of the inhibitory propeptide.

It carries out the reaction Endopeptidase of broad specificity, hydrolyzing substrates of both cathepsin L and cathepsin B.. In terms of biological role, cysteine protease that plays an essential role in host liquefaction to facilitate horizontal transmission of the virus. May participate in the degradation of foreign protein expressed by the baculovirus system. This is Viral cathepsin (VCATH) from Lepidoptera (butterflies and moths).